A 460-amino-acid polypeptide reads, in one-letter code: Argininosuccinate lyase (460 aa).

Belongs to the lyase 1 family. Argininosuccinate lyase subfamily.

Its subcellular location is the cytoplasm. The enzyme catalyses 2-(N(omega)-L-arginino)succinate = fumarate + L-arginine. The protein operates within amino-acid biosynthesis; L-arginine biosynthesis; L-arginine from L-ornithine and carbamoyl phosphate: step 3/3. This is Argininosuccinate lyase from Limosilactobacillus fermentum (strain NBRC 3956 / LMG 18251) (Lactobacillus fermentum).